The primary structure comprises 480 residues: tRNA (guanine(37)-N(1))-methyltransferase (480 aa).

S-adenosyl-L-methionine-binding positions include H244, 292 to 293 (DL), 321 to 322 (DG), and N342.

The protein belongs to the class I-like SAM-binding methyltransferase superfamily. TRM5/TYW2 family. Monomer.

It localises to the mitochondrion matrix. It is found in the nucleus. The protein localises to the cytoplasm. The catalysed reaction is guanosine(37) in tRNA + S-adenosyl-L-methionine = N(1)-methylguanosine(37) in tRNA + S-adenosyl-L-homocysteine + H(+). In terms of biological role, specifically methylates the N1 position of guanosine-37 in various cytoplasmic and mitochondrial tRNAs. Methylation is not dependent on the nature of the nucleoside 5' of the target nucleoside. This is the first step in the biosynthesis of wybutosine (yW), a modified base adjacent to the anticodon of tRNAs and required for accurate decoding. The polypeptide is tRNA (guanine(37)-N(1))-methyltransferase (Thalassiosira pseudonana (Marine diatom)).